The primary structure comprises 512 residues: ATP synthase subunit alpha (512 aa).

169 to 176 (GDRQTGKT) lines the ATP pocket.

Belongs to the ATPase alpha/beta chains family. In terms of assembly, F-type ATPases have 2 components, CF(1) - the catalytic core - and CF(0) - the membrane proton channel. CF(1) has five subunits: alpha(3), beta(3), gamma(1), delta(1), epsilon(1). CF(0) has four main subunits: a(1), b(1), b'(1) and c(9-12).

It is found in the cell inner membrane. It catalyses the reaction ATP + H2O + 4 H(+)(in) = ADP + phosphate + 5 H(+)(out). In terms of biological role, produces ATP from ADP in the presence of a proton gradient across the membrane. The alpha chain is a regulatory subunit. The polypeptide is ATP synthase subunit alpha (Jannaschia sp. (strain CCS1)).